Here is a 321-residue protein sequence, read N- to C-terminus: MIDFRPFYRQIATSNLSAWLETLPLQLKNWEKNTHGEYAKWAKIVDFLPELTADHLDLKNAVKSDRTLPLSEGERQRIIHHLQQLMPWRKGPYHLYGIHVDCEWRSDFKWQRVLPHLAPLQDRTVLDVGCGSGYHMWRMVGEGAKTVVGIDPTELFLCQFEAVRKLLNNDRRANLIPLGIEEMQPLGVFDTVFSMGVLYHRKSPLDHLTQLKNQLRKGGELVLETLVIDGDENTVLVPADRYAKMKNVYFIPSVACLINWLGKSGFTNIRCVDEAVTTLEEQRKTDWLNNESLIDFLDPQDHSKTIEGYPAPKRAVIIANK.

Carboxy-S-adenosyl-L-methionine is bound by residues Lys-90, Trp-104, Lys-109, Gly-129, 151–153, 180–181, Met-195, Tyr-199, and Arg-314; these read DPT and IE.

The protein belongs to the class I-like SAM-binding methyltransferase superfamily. CmoB family. As to quaternary structure, homotetramer.

The enzyme catalyses carboxy-S-adenosyl-L-methionine + 5-hydroxyuridine(34) in tRNA = 5-carboxymethoxyuridine(34) in tRNA + S-adenosyl-L-homocysteine + H(+). Its function is as follows. Catalyzes carboxymethyl transfer from carboxy-S-adenosyl-L-methionine (Cx-SAM) to 5-hydroxyuridine (ho5U) to form 5-carboxymethoxyuridine (cmo5U) at position 34 in tRNAs. The polypeptide is tRNA U34 carboxymethyltransferase (Actinobacillus succinogenes (strain ATCC 55618 / DSM 22257 / CCUG 43843 / 130Z)).